Consider the following 317-residue polypeptide: tRNA dimethylallyltransferase (317 aa).

18 to 25 lines the ATP pocket; the sequence is GPTATGKT. Position 20–25 (20–25) interacts with substrate; that stretch reads TATGKT. 3 interaction with substrate tRNA regions span residues 43-46, 167-171, and 281-288; these read DSAL, QRIQR, and KRQITWLR.

This sequence belongs to the IPP transferase family. In terms of assembly, monomer. Requires Mg(2+) as cofactor.

It carries out the reaction adenosine(37) in tRNA + dimethylallyl diphosphate = N(6)-dimethylallyladenosine(37) in tRNA + diphosphate. In terms of biological role, catalyzes the transfer of a dimethylallyl group onto the adenine at position 37 in tRNAs that read codons beginning with uridine, leading to the formation of N6-(dimethylallyl)adenosine (i(6)A). The polypeptide is tRNA dimethylallyltransferase (Alkalilimnicola ehrlichii (strain ATCC BAA-1101 / DSM 17681 / MLHE-1)).